The following is a 270-amino-acid chain: Glutamate racemase (270 aa).

Residues 13–14 (DS) and 45–46 (YG) each bind substrate. Catalysis depends on cysteine 77, which acts as the Proton donor/acceptor. 78-79 (NT) provides a ligand contact to substrate. The Proton donor/acceptor role is filled by cysteine 185. Residue 186-187 (TH) participates in substrate binding.

It belongs to the aspartate/glutamate racemases family.

It carries out the reaction L-glutamate = D-glutamate. The protein operates within cell wall biogenesis; peptidoglycan biosynthesis. Its function is as follows. Provides the (R)-glutamate required for cell wall biosynthesis. This Vibrio parahaemolyticus serotype O3:K6 (strain RIMD 2210633) protein is Glutamate racemase.